Here is a 507-residue protein sequence, read N- to C-terminus: Microcystinase C (507 aa).

The N-terminal stretch at 1 to 21 is a signal peptide; the sequence is MLDRRTLMGGILSMAGSKATG. The Zn(2+) site is built by aspartate 167, histidine 169, and histidine 191.

The protein belongs to the peptidase M81 family. Zn(2+) serves as cofactor.

Its activity is regulated as follows. Inhibited by the metal chelators EDTA and 1,10-phenanthroline. In terms of biological role, involved in peptidolytic degradation of cyclic heptapeptide hepatotoxin microcystin (MC). Cleaves both linear MC and the tetrapeptide degradation product of MC. Cleaves the Adda-Glu peptide bond of linear MC heptapeptides. This Sphingomonas sp protein is Microcystinase C.